Reading from the N-terminus, the 804-residue chain is Probable replication endonuclease from prophage-like region (804 aa).

Catalysis depends on O-(5'-phospho-DNA)-tyrosine intermediate residues Y498 and Y502.

Belongs to the phage GPA family.

In terms of biological role, possible endonuclease which induces a single-strand cut and initiates DNA replication. This chain is Probable replication endonuclease from prophage-like region, found in Shigella boydii serotype 4 (strain Sb227).